Reading from the N-terminus, the 298-residue chain is Rhodopsin (298 aa).

The Extracellular segment spans residues 1–15; the sequence is IHLHWYEYPPMNPMM. The helical transmembrane segment at 16–40 threads the bilayer; sequence YPLLLIFMLFTGILCLAGNFVTIWV. Topologically, residues 41-52 are cytoplasmic; sequence FMNTKSLRTPAN. The chain crosses the membrane as a helical span at residues 53 to 75; that stretch reads LLVVNLAMSDFLMMFTMFPPMMV. The Extracellular portion of the chain corresponds to 76 to 89; that stretch reads TCYYHTWTLGPTFC. C89 and C166 are disulfide-bonded. The chain crosses the membrane as a helical span at residues 90-112; the sequence is QVYAFLGNLCGCASIWTMVFITF. Residues 113-115 carry the 'Ionic lock' involved in activated form stabilization motif; it reads DRY. Residues 113–131 lie on the Cytoplasmic side of the membrane; the sequence is DRYNVIVKGVAGEPLSTKK. The helical transmembrane segment at 132–152 threads the bilayer; the sequence is ASLWILTIWVLSTTWCMAPFF. Residues 153–179 are Extracellular-facing; sequence GWNHYVPEGNLTGCGTDYLSEDILSRS. The N-linked (GlcNAc...) asparagine glycan is linked to N162. The chain crosses the membrane as a helical span at residues 180-201; the sequence is YLYVYSTWVYFLPLAITIYCYV. Residues 202–242 are Cytoplasmic-facing; the sequence is FIIKAVAAHEKGMRDQAKKMGIKSLRNEEAQKTSAECRLAK. The helical transmembrane segment at 243 to 264 threads the bilayer; sequence IAMTTVALWFIAWTPYLLINWV. Topologically, residues 265–275 are extracellular; it reads GMFARSYLSPV. Residues 276–297 traverse the membrane as a helical segment; it reads YTIWGYVFAKANAVYNPIVYAI. Position 285 is an N6-(retinylidene)lysine (K285).

This sequence belongs to the G-protein coupled receptor 1 family. Opsin subfamily. In terms of assembly, homodimer. Interacts with GNAQ. In terms of processing, contains one covalently linked retinal chromophore.

It is found in the cell projection. The protein resides in the rhabdomere membrane. In terms of biological role, photoreceptor required for image-forming vision at low light intensity. Can use both retinal and 3-dehydroretinal as visual pigment. Light-induced isomerization of 11-cis to all-trans retinal triggers a conformational change that activates signaling via G-proteins. Signaling via GNAQ probably mediates the activation of phospholipase C. The chain is Rhodopsin (RHO) from Procambarus orcinus (Crayfish).